We begin with the raw amino-acid sequence, 352 residues long: Uroporphyrinogen decarboxylase (352 aa).

Residues 27–31 (RQAGR), Asp-77, Tyr-154, Thr-209, and His-325 each bind substrate.

Belongs to the uroporphyrinogen decarboxylase family. In terms of assembly, homodimer.

The protein localises to the cytoplasm. The enzyme catalyses uroporphyrinogen III + 4 H(+) = coproporphyrinogen III + 4 CO2. It functions in the pathway porphyrin-containing compound metabolism; protoporphyrin-IX biosynthesis; coproporphyrinogen-III from 5-aminolevulinate: step 4/4. Functionally, catalyzes the decarboxylation of four acetate groups of uroporphyrinogen-III to yield coproporphyrinogen-III. The sequence is that of Uroporphyrinogen decarboxylase from Legionella pneumophila (strain Corby).